Reading from the N-terminus, the 308-residue chain is Glucan 1,3-beta-glucosidase BGL2 (308 aa).

The first 18 residues, 1 to 18, serve as a signal peptide directing secretion; the sequence is MQIKFLTTLATVLTSVAA. Glu-119 acts as the Proton donor in catalysis. The N-linked (GlcNAc...) asparagine glycan is linked to Asn-197. The Nucleophile role is filled by Glu-228.

The protein belongs to the glycosyl hydrolase 17 family.

The protein localises to the secreted. Its subcellular location is the cell wall. It is found in the cytoplasm. It catalyses the reaction Successive hydrolysis of beta-D-glucose units from the non-reducing ends of (1-&gt;3)-beta-D-glucans, releasing alpha-glucose.. Functionally, cell wall glucan 1,3-beta-glucosidase involved in cell wall biosynthesis and virulence. Crucial for delivery of beta-1,3-glucan to the biofilm matrix and for accumulation of mature matrix biomass. Plays a role as a major antigen in human systemic candidiasis patients. The polypeptide is Glucan 1,3-beta-glucosidase BGL2 (BGL2) (Candida albicans (strain SC5314 / ATCC MYA-2876) (Yeast)).